Here is a 506-residue protein sequence, read N- to C-terminus: Tetratricopeptide repeat protein 8 (506 aa).

The interval 83–112 (RPGTSFARPKTSAKGVNPILRPTTNAGRPL) is disordered. TPR repeat units follow at residues 217–250 (YYWK…KKLI), 251–283 (ETFA…FPEN), 284–317 (VTML…ESNN), 319–351 (EAIA…GVSS), 353–385 (ELFL…MTDD), 388–421 (ADVW…DPDH), 423–455 (ESLV…NPYM), and 456–489 (FEGN…FPEH).

As to quaternary structure, part of BBSome complex, that contains at least bbs-1, bbs-2, bbs-4, bbs-5, osm-12, bbs-8/ttc-8 and bbs-9. Expressed in head and tail neurons. Expressed in ciliated male tail-neurons. Expressed in thermosensory and CO(2) sensory AFD neurons.

It localises to the cell projection. It is found in the cilium. The protein localises to the cytoplasm. The protein resides in the cytoskeleton. Its subcellular location is the cilium basal body. It localises to the cilium axoneme. Its function is as follows. Component of the BBSome complex. The BBSome complex is thought to function as a coat complex required for sorting of specific membrane proteins to the primary cilia. The BBSome complex is required for ciliogenesis but is dispensable for centriolar satellite function. Required for proper BBSome complex assembly and its ciliary localization. Required for cilia biogenesis and both the assembly and movement of intraflagellar transport proteins along the ciliary axoneme. Plays a role in guanylyl cyclase localization in the ring-like structures at the base of the finger compartment in AFD sensory neurons. The chain is Tetratricopeptide repeat protein 8 from Caenorhabditis elegans.